The sequence spans 622 residues: Prolactin receptor (622 aa).

The signal sequence occupies residues 1–24 (MKENVASATVFTLLLFLNTCLLNG). The Extracellular segment spans residues 25–234 (QLPPGKPEIF…QIPSDFTMND (210 aa)). Fibronectin type-III domains follow at residues 27–128 (PPGK…VQPD) and 129–229 (PPLE…IPSD). Cysteine 36 and cysteine 46 form a disulfide bridge. Asparagine 59 carries an N-linked (GlcNAc...) asparagine glycan. A disulfide bridge links cysteine 75 with cysteine 86. A glycan (N-linked (GlcNAc...) asparagine) is linked at asparagine 104. Zn(2+) is bound by residues aspartate 211 and histidine 212. The WSXWS motif signature appears at 215-219 (WSAWS). The N-linked (GlcNAc...) asparagine glycan is linked to asparagine 233. A helical transmembrane segment spans residues 235–258 (TTVWISVAVLSAVICLIIVWAVAL). Over 259–622 (KGYSMVTCIF…DPACFTHSFH (364 aa)) the chain is Cytoplasmic. A Box 1 motif motif is present at residues 267-275 (IFPPVPGPK). 3 disordered regions span residues 326 to 378 (MSVH…YDPE), 461 to 505 (SSQT…GSAK), and 520 to 545 (ALSL…NNKE). Residues 466-486 (KSREEGKATQQREVESFHSET) show a composition bias toward basic and acidic residues.

It belongs to the type I cytokine receptor family. Type 1 subfamily. Homodimer upon hormone binding. Interacts with SMARCA1. Interacts with GH1. Interacts with CSH. Interacts with NEK3 and VAV2 and this interaction is prolactin-dependent. As to expression, expressed in breast, placenta, kidney, liver and pancreas.

It is found in the membrane. Its subcellular location is the secreted. Its function is as follows. This is a receptor for the anterior pituitary hormone prolactin (PRL). Acts as a prosurvival factor for spermatozoa by inhibiting sperm capacitation through suppression of SRC kinase activation and stimulation of AKT. Isoform 4 is unable to transduce prolactin signaling. Isoform 6 is unable to transduce prolactin signaling. In Homo sapiens (Human), this protein is Prolactin receptor (PRLR).